A 95-amino-acid polypeptide reads, in one-letter code: Aspartyl/glutamyl-tRNA(Asn/Gln) amidotransferase subunit C (95 aa).

Belongs to the GatC family. As to quaternary structure, heterotrimer of A, B and C subunits.

It carries out the reaction L-glutamyl-tRNA(Gln) + L-glutamine + ATP + H2O = L-glutaminyl-tRNA(Gln) + L-glutamate + ADP + phosphate + H(+). The enzyme catalyses L-aspartyl-tRNA(Asn) + L-glutamine + ATP + H2O = L-asparaginyl-tRNA(Asn) + L-glutamate + ADP + phosphate + 2 H(+). Allows the formation of correctly charged Asn-tRNA(Asn) or Gln-tRNA(Gln) through the transamidation of misacylated Asp-tRNA(Asn) or Glu-tRNA(Gln) in organisms which lack either or both of asparaginyl-tRNA or glutaminyl-tRNA synthetases. The reaction takes place in the presence of glutamine and ATP through an activated phospho-Asp-tRNA(Asn) or phospho-Glu-tRNA(Gln). The chain is Aspartyl/glutamyl-tRNA(Asn/Gln) amidotransferase subunit C from Thioalkalivibrio sulfidiphilus (strain HL-EbGR7).